We begin with the raw amino-acid sequence, 189 residues long: Small t antigen (189 aa).

An N-acetylmethionine; by host modification is found at Met1. One can recognise a J domain in the interval 12–75; sequence ELMDLLQITR…LMEIRSQCGS (64 aa). Residues 111–124 form a C4-type; atypical zinc finger; that stretch reads CTKFVRANCNCIVC. The H1C3-type; atypical zinc finger occupies 130–152; the sequence is HAGTKKNLKKPCLVWGECWCYKC.

As to quaternary structure, interacts with host PPP2R1A; the interaction inhibits PP2A activity.

Its subcellular location is the host cytoplasm. The protein localises to the host nucleus. In terms of biological role, promotes efficient viral genome replication by accelerating both G1 and S phase progression of the cell cycle. Inhibits host PP2A by binding to the A subunit, thereby displacing lower affinity regulatory B subunit. Inactivation of PP2A in turn results in the transactivation of cyclin A and cyclin D1 promoters. Late during the infection cycle, ST may induce dephosphorylation of host MTOR, leading to the inhibition of cap-dependent translation. May establish and maintain high levels of viral genomes during persistent infection in cell culture. The polypeptide is Small t antigen (B-lymphotropic polyomavirus (LPV)).